The chain runs to 199 residues: Putative peroxiredoxin ycf42 (199 aa).

Residues 8–165 enclose the Thioredoxin domain; sequence LRVGQLAPDF…TLRVLQAIQY (158 aa). Residue C53 is the Cysteine sulfenic acid (-SOH) intermediate of the active site.

This sequence belongs to the peroxiredoxin family. AhpC/Prx1 subfamily. Homodimer; disulfide-linked, upon oxidation. Post-translationally, the Cys-53-SH group is the primary site of oxidation by H(2)O(2), and the oxidized Cys-53 (probably Cys-SOH) rapidly reacts with Cys-174-SH of the other subunit to form an intermolecular disulfide. This disulfide is subsequently reduced by thioredoxin.

The protein resides in the plastid. The protein localises to the chloroplast. The enzyme catalyses a hydroperoxide + [thioredoxin]-dithiol = an alcohol + [thioredoxin]-disulfide + H2O. In terms of biological role, thiol-specific peroxidase that catalyzes the reduction of hydrogen peroxide and organic hydroperoxides to water and alcohols, respectively. Plays a role in cell protection against oxidative stress by detoxifying peroxides. In Pyropia yezoensis (Susabi-nori), this protein is Putative peroxiredoxin ycf42 (ycf42).